Reading from the N-terminus, the 258-residue chain is UPF0246 protein YaaA (258 aa).

It belongs to the UPF0246 family.

The protein is UPF0246 protein YaaA of Escherichia coli O157:H7 (strain EC4115 / EHEC).